Consider the following 281-residue polypeptide: Kinetochore-associated protein NSL1 homolog (281 aa).

A Phosphoserine modification is found at Ser-4. Thr-244 bears the Phosphothreonine mark.

As to quaternary structure, component of the MIS12 complex composed of MIS12, DSN1, NSL1/DC8 and PMF1. Interacts with KNL1.

It is found in the nucleus. The protein resides in the chromosome. It localises to the centromere. Its subcellular location is the kinetochore. In terms of biological role, part of the MIS12 complex which is required for normal chromosome alignment and segregation and kinetochore formation during mitosis. This Homo sapiens (Human) protein is Kinetochore-associated protein NSL1 homolog (NSL1).